Consider the following 239-residue polypeptide: Glucosamine-6-phosphate deaminase (239 aa).

D62 (proton acceptor; for enolization step) is an active-site residue. Catalysis depends on N128, which acts as the For ring-opening step. The Proton acceptor; for ring-opening step role is filled by H130. E135 (for ring-opening step) is an active-site residue.

This sequence belongs to the glucosamine/galactosamine-6-phosphate isomerase family. NagB subfamily.

It carries out the reaction alpha-D-glucosamine 6-phosphate + H2O = beta-D-fructose 6-phosphate + NH4(+). It functions in the pathway amino-sugar metabolism; N-acetylneuraminate degradation; D-fructose 6-phosphate from N-acetylneuraminate: step 5/5. In terms of biological role, catalyzes the reversible isomerization-deamination of glucosamine 6-phosphate (GlcN6P) to form fructose 6-phosphate (Fru6P) and ammonium ion. The sequence is that of Glucosamine-6-phosphate deaminase from Lactobacillus helveticus (strain DPC 4571).